A 276-amino-acid chain; its full sequence is Tyrosinase (276 aa).

Residues histidine 38, histidine 56, histidine 66, histidine 193, histidine 197, and histidine 219 each contribute to the Cu cation site.

This sequence belongs to the tyrosinase family. Cu(2+) is required as a cofactor.

The enzyme catalyses 2 L-dopa + O2 = 2 L-dopaquinone + 2 H2O. The catalysed reaction is L-tyrosine + O2 = L-dopaquinone + H2O. This is a copper-containing oxidase that functions in the formation of pigments such as melanins and other polyphenolic compounds. In Streptomyces galbus, this protein is Tyrosinase (melC2).